Here is a 466-residue protein sequence, read N- to C-terminus: Replication termination factor 1 (466 aa).

DNA-binding domain regions lie at residues 94–249 (RDYT…LRRK) and 250–421 (YNPF…KKTL). HTH myb-type domains are found at residues 251–304 (NPFK…QPGE) and 305–363 (INRS…SRDI). DNA-binding regions (H-T-H motif) lie at residues 278-300 (WSLIGKLSNRLPMHCRDHWRDYI) and 336-359 (WSLISKNMRNRHRHHCRWKYYTLI).

The protein resides in the nucleus. Mediates site-specific replication termination at the polar replication barrier RTS1, a barrier which ensures that replication of the mat1 locus in S.pombe occurs in the centromere-proximal direction. The sequence is that of Replication termination factor 1 (rtf1) from Schizosaccharomyces pombe (strain 972 / ATCC 24843) (Fission yeast).